We begin with the raw amino-acid sequence, 152 residues long: MTQKLHINPHLLIVEARFYNEISDELLAGAVSVLQKSGVSYDIITVPGALEIPAAIAFAEKDKTVFYDGYVALGCVIRGETYHFEIVADNSCRALMDLTVHQQLAIGNGILTVENEKQAWARAKQGEKNKGDFAAEAALCMIALKKRFGDNR.

5-amino-6-(D-ribitylamino)uracil-binding positions include Phe-18, Ala-49–Glu-51, and Cys-75–Ile-77. Residue Glu-80–Thr-81 coordinates (2S)-2-hydroxy-3-oxobutyl phosphate. His-83 (proton donor) is an active-site residue. Asn-108 serves as a coordination point for 5-amino-6-(D-ribitylamino)uracil. Arg-122 contacts (2S)-2-hydroxy-3-oxobutyl phosphate.

Belongs to the DMRL synthase family.

The enzyme catalyses (2S)-2-hydroxy-3-oxobutyl phosphate + 5-amino-6-(D-ribitylamino)uracil = 6,7-dimethyl-8-(1-D-ribityl)lumazine + phosphate + 2 H2O + H(+). It functions in the pathway cofactor biosynthesis; riboflavin biosynthesis; riboflavin from 2-hydroxy-3-oxobutyl phosphate and 5-amino-6-(D-ribitylamino)uracil: step 1/2. Functionally, catalyzes the formation of 6,7-dimethyl-8-ribityllumazine by condensation of 5-amino-6-(D-ribitylamino)uracil with 3,4-dihydroxy-2-butanone 4-phosphate. This is the penultimate step in the biosynthesis of riboflavin. The polypeptide is 6,7-dimethyl-8-ribityllumazine synthase (Bartonella bacilliformis (strain ATCC 35685 / KC583 / Herrer 020/F12,63)).